The primary structure comprises 616 residues: Leucine aminopeptidase (616 aa).

Substrate contacts are provided by residues 128-130 and 282-286; these read QCQ and GGMEN. H309 is a Zn(2+) binding site. E310 serves as the catalytic Proton acceptor. 2 residues coordinate Zn(2+): H313 and E332. Y397 functions as the Proton donor in the catalytic mechanism. 566-568 contributes to the substrate binding site; that stretch reads RMK.

It belongs to the peptidase M1 family. Zn(2+) is required as a cofactor.

The protein localises to the cytoplasm. The enzyme catalyses an epoxide + H2O = an ethanediol. Its function is as follows. Aminopeptidase that preferentially cleaves di- and tripeptides. Also has low epoxide hydrolase activity (in vitro). Can hydrolyze the epoxide leukotriene LTA(4) but it forms preferentially 5,6-dihydroxy-7,9,11,14-eicosatetraenoic acid rather than the cytokine leukotriene B(4) as the product compared to the homologous mammalian enzyme (in vitro). The protein is Leucine aminopeptidase (LKHA4) of Arabidopsis thaliana (Mouse-ear cress).